The primary structure comprises 42 residues: Photosystem I reaction center subunit IX (42 aa).

The chain crosses the membrane as a helical span at residues Y7 to I27.

It belongs to the PsaJ family.

The protein localises to the plastid. The protein resides in the chloroplast thylakoid membrane. Its function is as follows. May help in the organization of the PsaE and PsaF subunits. This chain is Photosystem I reaction center subunit IX, found in Agrostis stolonifera (Creeping bentgrass).